Consider the following 129-residue polypeptide: Small ribosomal subunit protein uS12 (129 aa).

This sequence belongs to the universal ribosomal protein uS12 family. Part of the 30S ribosomal subunit. Contacts proteins S8 and S17. May interact with IF1 in the 30S initiation complex.

Its function is as follows. With S4 and S5 plays an important role in translational accuracy. In terms of biological role, interacts with and stabilizes bases of the 16S rRNA that are involved in tRNA selection in the A site and with the mRNA backbone. Located at the interface of the 30S and 50S subunits, it traverses the body of the 30S subunit contacting proteins on the other side and probably holding the rRNA structure together. The combined cluster of proteins S8, S12 and S17 appears to hold together the shoulder and platform of the 30S subunit. This Rickettsia typhi (strain ATCC VR-144 / Wilmington) protein is Small ribosomal subunit protein uS12.